The following is a 222-amino-acid chain: UPF0488 protein C8orf33 homolog (222 aa).

The segment covering 1–16 (MAEPGRPAREAPAASS) has biased composition (low complexity). Disordered regions lie at residues 1-103 (MAEP…AEQL), 119-146 (KTQRPTPKQKEQAVGAIRTLRSEKTPLP), and 186-210 (VSEATRKKSGRVCRPRPAERAKTTP). At A2 the chain carries N-acetylalanine. The segment covering 17-28 (RKTHRAPRRPRP) has biased composition (basic residues). An Omega-N-methylarginine modification is found at R27. Positions 29-39 (SRSASGASEPP) are enriched in low complexity. S75 is modified (phosphoserine). Over residues 93–103 (PPSAEAQAEQL) the composition is skewed to low complexity.

It belongs to the UPF0488 family.

This is UPF0488 protein C8orf33 homolog from Mus musculus (Mouse).